Reading from the N-terminus, the 466-residue chain is Alpha-1A adrenergic receptor (466 aa).

Residues Met-1–Ile-27 are Extracellular-facing. 3 N-linked (GlcNAc...) asparagine glycosylation sites follow: Asn-7, Asn-13, and Asn-22. The chain crosses the membrane as a helical span at residues Leu-28–Val-51. Residues Ala-52–Tyr-64 are Cytoplasmic-facing. The chain crosses the membrane as a helical span at residues Ile-65 to Ile-88. Topologically, residues Leu-89–Cys-99 are extracellular. Cys-99 and Cys-176 are oxidised to a cystine. The chain crosses the membrane as a helical span at residues Asn-100–Ile-122. The Cytoplasmic segment spans residues Asp-123–Gly-143. Residues Val-144–Gln-167 form a helical membrane-spanning segment. Over Gln-168–Glu-181 the chain is Extracellular. A helical transmembrane segment spans residues Pro-182–Cys-205. The Cytoplasmic portion of the chain corresponds to Arg-206–Thr-273. Ser-215 carries the post-translational modification Phosphoserine; by PKA. Residues Leu-274–Phe-297 form a helical membrane-spanning segment. The Extracellular segment spans residues Phe-298–Glu-305. The helical transmembrane segment at Thr-306–Ser-329 threads the bilayer. At Ser-330 to Val-466 the chain is on the cytoplasmic side. Residues Lys-334–Arg-349 carry the Nuclear localization signal motif. A lipid anchor (S-palmitoyl cysteine) is attached at Cys-345.

Belongs to the G-protein coupled receptor 1 family. Adrenergic receptor subfamily. ADRA1A sub-subfamily. As to quaternary structure, homo- and heterooligomer. Heterooligomerizes with ADRA1B homooligomers in cardiac myocytes. Interacts with CAVIN4.

The protein resides in the nucleus membrane. The protein localises to the cell membrane. It is found in the cytoplasm. It localises to the membrane. Its subcellular location is the caveola. Its function is as follows. This alpha-adrenergic receptor mediates its action by association with G proteins that activate a phosphatidylinositol-calcium second messenger system. Its effect is mediated by G(q) and G(11) proteins. Nuclear ADRA1A-ADRA1B heterooligomers regulate phenylephrine (PE)-stimulated ERK signaling in cardiac myocytes. In Mus musculus (Mouse), this protein is Alpha-1A adrenergic receptor (Adra1a).